The following is a 199-amino-acid chain: Early activation antigen CD69 (199 aa).

The span at 1-14 (MDSENCSITENSSS) shows a compositional bias: polar residues. Residues 1–20 (MDSENCSITENSSSHLERGQ) are disordered. Topologically, residues 1–40 (MDSENCSITENSSSHLERGQKDHGTSIHFEKHHEGSIQVS) are cytoplasmic. The helical; Signal-anchor for type II membrane protein transmembrane segment at 41 to 61 (IPWAVLIVVLITSLIIALIAL) threads the bilayer. Residues 62–199 (NVGKYNCPGL…FHWVCSKPSR (138 aa)) lie on the Extracellular side of the membrane. Cystine bridges form between Cys85–Cys96, Cys113–Cys194, and Cys173–Cys186. The C-type lectin domain occupies 92 to 195 (YKRTCYFFST…CEANFHWVCS (104 aa)). N-linked (GlcNAc...) asparagine glycans are attached at residues Asn150, Asn166, and Asn180.

In terms of assembly, homodimer; disulfide-linked. Interacts with S100A8 and S100A9. Interacts with galactin-1/LGALS1. Interacts with S1PR1; this interaction mediates S1PR1 degradation. Interacts with JAK3 and STAT5. Post-translationally, constitutive Ser/Thr phosphorylation in both mature thymocytes and activated T-lymphocytes. As to expression, expressed on the surface of activated T-cells, B-cells, natural killer cells, neutrophils and platelets. Present also in eosinophils.

It is found in the cell membrane. Functionally, transmembrane protein expressed mainly on T-cells resident in mucosa that plays an essential role in immune cell homeostasis. Rapidly expressed on the surface of platelets, T-lymphocytes and NK cells upon activation by various stimuli, such as antigen recognition or cytokine signaling, stimulates different signaling pathways in different cell types. Negatively regulates Th17 cell differentiation through its carbohydrate dependent interaction with galectin-1/LGALS1 present on immature dendritic cells. Association of CD69 cytoplasmic tail with the JAK3/STAT5 signaling pathway regulates the transcription of RORgamma/RORC and, consequently, differentiation toward the Th17 lineage. Also acts via the S100A8/S100A9 complex present on peripheral blood mononuclear cells to promote the conversion of naive CD4 T-cells into regulatory T-cells. Acts as an oxidized low-density lipoprotein (oxLDL) receptor in CD4 T-lymphocytes and negatively regulates the inflammatory response by inducing the expression of PDCD1 through the activation of NFAT. Participates in adipose tissue-derived mesenchymal stem cells (ASCs)-mediated protection against P.aeruginosa infection. Mechanistically, specifically recognizes P.aeruginosa to promote ERK1 activation, followed by granulocyte-macrophage colony-stimulating factor (GM-CSF) and other inflammatory cytokines secretion. In eosinophils, induces IL-10 production through the ERK1/2 pathway. Negatively regulates the chemotactic responses of effector lymphocytes and dendritic cells (DCs) to sphingosine 1 phosphate/S1P by acting as a S1PR1 receptor agonist and facilitating the internalization and degradation of the receptor. The chain is Early activation antigen CD69 (Cd69) from Mus musculus (Mouse).